The primary structure comprises 278 residues: HTH-type transcriptional activator RhaS (278 aa).

The HTH araC/xylS-type domain occupies 174–272; sequence NHLIAWLEDH…GWSPREIRQG (99 aa). DNA-binding regions (H-T-H motif) lie at residues 191–212 and 239–262; these read EAIADRFALSLRTLHRQLKQHT and VTHIAFSCGFADSNHFSTLFRREF.

As to quaternary structure, binds DNA as a dimer.

The protein resides in the cytoplasm. Activates expression of the rhaBAD and rhaT operons. The chain is HTH-type transcriptional activator RhaS from Escherichia fergusonii (strain ATCC 35469 / DSM 13698 / CCUG 18766 / IAM 14443 / JCM 21226 / LMG 7866 / NBRC 102419 / NCTC 12128 / CDC 0568-73).